The following is a 342-amino-acid chain: Platelet-activating factor receptor (342 aa).

The Extracellular segment spans residues 1-16 (MEPHDSSHMDSEFRYT). Residues 17 to 38 (LFPIVYSIIFVLGVIANGYVLW) traverse the membrane as a helical segment. The Cytoplasmic portion of the chain corresponds to 39-54 (VFARLYPCKKFNEIKI). A helical membrane pass occupies residues 55–74 (FMVNLTMADMLFLITLPLWI). The Extracellular portion of the chain corresponds to 75–91 (VYYQNQGNWILPKFLCN). Cys-90 and Cys-173 form a disulfide bridge. A helical membrane pass occupies residues 92–113 (VAGCLFFINTYCSVAFLGVITY). Residues 114-133 (NRFQAVTRPIKTAQANTRKR) are Cytoplasmic-facing. A helical transmembrane segment spans residues 134 to 155 (GISLSLVIWVAIVGAASYFLIL). Residues 156–184 (DSTNTVPDSAGSGNVTRCFEHYEKGSVPV) are Extracellular-facing. Asn-169 carries an N-linked (GlcNAc...) asparagine glycan. A helical membrane pass occupies residues 185-205 (LIIHIFIVFSFFLVFLIILFC). Over 206 to 233 (NLVIIRTLLMQPVQQQRNAEVKRRALWM) the chain is Cytoplasmic. The chain crosses the membrane as a helical span at residues 234-254 (VCTVLAVFIICFVPHHVVQLP). Residues 255–276 (WTLAELGFQDSKFHQAINDAHQ) lie on the Extracellular side of the membrane. A helical transmembrane segment spans residues 277–296 (VTLCLLSTNCVLDPVIYCFL). At 297-342 (TKKFRKHLTEKFYSMRSSRKCSRATTDTVTEVVVPFNQIPGNSLKN) the chain is on the cytoplasmic side.

Belongs to the G-protein coupled receptor 1 family. In terms of assembly, interacts with ARRB1. Expressed in the placenta, lung, left and right heart ventricles, heart atrium, leukocytes and differentiated HL-60 granulocytes.

It localises to the cell membrane. Receptor for platelet activating factor, a chemotactic phospholipid mediator that possesses potent inflammatory, smooth-muscle contractile and hypotensive activity. Seems to mediate its action via a G protein that activates a phosphatidylinositol-calcium second messenger system. The polypeptide is Platelet-activating factor receptor (PTAFR) (Homo sapiens (Human)).